Reading from the N-terminus, the 547-residue chain is Nuclear speckle splicing regulatory protein 1 (547 aa).

The interval Lys25 to Lys51 is disordered. Phosphoserine is present on residues Ser27 and Ser33. The stretch at Ile103–Lys177 forms a coiled coil. The tract at residues Asn105–Ala169 is necessary for alternative splicing activity. Positions Asn188–Ser523 are disordered. Glycyl lysine isopeptide (Lys-Gly) (interchain with G-Cter in SUMO2) cross-links involve residues Lys198 and Lys209. The segment covering Ser200–Pro217 has biased composition (basic and acidic residues). Residues Glu223 to Leu232 show a composition bias toward polar residues. Residues Glu237 to Asp254 are compositionally biased toward acidic residues. Phosphoserine occurs at positions 247 and 252. The segment covering Asp255 to Glu269 has biased composition (basic and acidic residues). Lys276 carries the post-translational modification N6-acetyllysine. Positions Tyr277 to Ser287 are enriched in basic residues. Residue Lys279 forms a Glycyl lysine isopeptide (Lys-Gly) (interchain with G-Cter in SUMO2) linkage. Over residues Arg308–Ser339 the composition is skewed to basic and acidic residues. Residues Ser340–Arg355 are compositionally biased toward basic residues. 2 stretches are compositionally biased toward basic and acidic residues: residues His356 to Arg480 and Arg490 to Pro506. Positions Lys376–Arg417 form a coiled coil. Ser447 is subject to Phosphoserine.

The protein belongs to the NSRP1 family. Interacts (via C-terminus) with SRSF1. Interacts (via C-terminus) with SRSF2.

It is found in the nucleus. Its subcellular location is the nucleus speckle. Its function is as follows. RNA-binding protein that mediates pre-mRNA alternative splicing regulation. The sequence is that of Nuclear speckle splicing regulatory protein 1 (Nsrp1) from Rattus norvegicus (Rat).